Reading from the N-terminus, the 68-residue chain is Toxin Cg2 (68 aa).

The LCN-type CS-alpha/beta domain occupies 1–66; that stretch reads KDGYLVNKST…VYPIPGKTCS (66 aa). 4 disulfide bridges follow: Cys12/Cys65, Cys16/Cys41, Cys25/Cys46, and Cys29/Cys48.

It belongs to the long (4 C-C) scorpion toxin superfamily. Sodium channel inhibitor family. In terms of tissue distribution, expressed by the venom gland.

Its subcellular location is the secreted. Functionally, binds to sodium channels (Nav) and inhibits them. This Centruroides gracilis (Slenderbrown scorpion) protein is Toxin Cg2.